A 332-amino-acid polypeptide reads, in one-letter code: Glycerol-3-phosphate dehydrogenase [NAD(P)+] (332 aa).

Residues W11, R30, and K108 each contribute to the NADPH site. Sn-glycerol 3-phosphate is bound by residues K108, G137, and S139. Position 141 (A141) interacts with NADPH. Sn-glycerol 3-phosphate is bound by residues K192, D245, S255, R256, and N257. K192 acts as the Proton acceptor in catalysis. R256 contacts NADPH. The NADPH site is built by V280 and E282.

The protein belongs to the NAD-dependent glycerol-3-phosphate dehydrogenase family.

It localises to the cytoplasm. It catalyses the reaction sn-glycerol 3-phosphate + NAD(+) = dihydroxyacetone phosphate + NADH + H(+). It carries out the reaction sn-glycerol 3-phosphate + NADP(+) = dihydroxyacetone phosphate + NADPH + H(+). Its pathway is membrane lipid metabolism; glycerophospholipid metabolism. Catalyzes the reduction of the glycolytic intermediate dihydroxyacetone phosphate (DHAP) to sn-glycerol 3-phosphate (G3P), the key precursor for phospholipid synthesis. The sequence is that of Glycerol-3-phosphate dehydrogenase [NAD(P)+] from Burkholderia lata (strain ATCC 17760 / DSM 23089 / LMG 22485 / NCIMB 9086 / R18194 / 383).